The following is a 112-amino-acid chain: Colipase (112 aa).

A signal peptide spans 1-17; sequence MEKILVLLLVALAVVYA. Positions 18–22 are cleaved as a propeptide — enterostatin, activation peptide; sequence VPDPR. Cystine bridges form between cysteine 34-cysteine 45, cysteine 40-cysteine 56, cysteine 44-cysteine 78, cysteine 66-cysteine 86, and cysteine 80-cysteine 104.

This sequence belongs to the colipase family. As to quaternary structure, forms a 1:1 stoichiometric complex with pancreatic lipase. In terms of tissue distribution, expressed by the pancreas.

Its subcellular location is the secreted. Its function is as follows. Colipase is a cofactor of pancreatic lipase. It allows the lipase to anchor itself to the lipid-water interface. Without colipase the enzyme is washed off by bile salts, which have an inhibitory effect on the lipase. Enterostatin has a biological activity as a satiety signal. In Canis lupus familiaris (Dog), this protein is Colipase (CLPS).